The primary structure comprises 513 residues: Histone acetyltransferase KAT5 (513 aa).

Residues I8–L65 form the Tudor-knot domain. N6-acetyllysine is present on K52. Residues Q69–L106 are disordered. S86 carries the post-translational modification Phosphoserine. Position 90 is a phosphoserine; by CDK1 and CDK9 (S90). An N6-acetyllysine; by autocatalysis mark is found at K104 and K120. Positions R122 to V217 are disordered. A compositionally biased stretch (polar residues) spans P133–H144. N6-acetyllysine; by autocatalysis is present on residues K148, K150, K187, and K189. Residue S199 is modified to Phosphoserine. The 278-residue stretch at T227–P504 folds into the MYST-type HAT domain. The C2HC MYST-type zinc finger occupies L260–L285. The residue at position 327 (K327) is an N6-acetyllysine; by autocatalysis. An interaction with ATF2 region spans residues A368 to W513. Acetyl-CoA-binding positions include I370 to T372 and Q377 to K383. Residue E403 is the Proton donor/acceptor of the active site. Residues S407 and S416 each coordinate acetyl-CoA. A Glycyl lysine isopeptide (Lys-Gly) (interchain with G-Cter in SUMO1); alternate cross-link involves residue K430. K430 participates in a covalent cross-link: Glycyl lysine isopeptide (Lys-Gly) (interchain with G-Cter in SUMO2); alternate. K451 participates in a covalent cross-link: Glycyl lysine isopeptide (Lys-Gly) (interchain with G-Cter in SUMO1).

Belongs to the MYST (SAS/MOZ) family. In terms of assembly, component of the NuA4 histone acetyltransferase complex which contains the catalytic subunit KAT5/TIP60 and the subunits EP400, TRRAP/PAF400, BRD8/SMAP, EPC1, DMAP1/DNMAP1, RUVBL1/TIP49, RUVBL2, ING3, actin, ACTL6A/BAF53A, MORF4L1/MRG15, MORF4L2/MRGX, MRGBP, YEATS4/GAS41, VPS72/YL1 and MEAF6. KAT5/TIP60, EPC1, and ING3 together constitute a minimal HAT complex termed Piccolo NuA4. The NuA4 complex interacts with MYC. Interacts with ATM. Interacts with JADE1. Interacts with PLA2G4A/CPLA2, EDNRA and HDAC7. Interacts with the cytoplasmic tail of APP and APBB1/FE65. Interacts with TRIM24 and TRIM68. Forms a complex with SENP6 and UBE2I in response to UV irradiation. Identified in a complex with HINT1. Interacts with ATF2 and CUL3. Interacts with NR1D2 (via N-terminus). Component of a SWR1-like complex. Interacts with FOXP3. Interacts with ZBTB49. Interacts with SRF. Interacts with ATF3; promoting autoacetylation and deubiquitination by USP7. Interacts with EP300/p300; interaction promotes KAT5 autoacetylation. Interacts with PRKDC; interaction is impaired following KAT5 sumoylation. Interacts with GPR50. Interacts with NME3; this interaction enables recruitment of NME3 at DNA damage sites where it plays a role in the repair of DNA. Phosphorylated on Ser-86 and Ser-90; enhanced during G2/M phase. The phosphorylated form has a higher activity. Phosphorylation at Ser-90 by CDK1 or CDK9 is a prerequisite for phosphorylation at Ser-86 by GSK3. Phosphorylation at Ser-86 by GSK3 (GSK3A or GSK3B) activates acetyltransferase and acyltransferase activity. Phosphorylation at Ser-90 by CDK9 promotes KAT5 recruitment to chromatin. Phosphorylation by VRK1 following DNA damage promotes KAT5 association with chromatin and histone acetyltransferase activity. In terms of processing, autoacetylated. Autoacetylation is required for histone acetyltransferase activity. Autoacetylation at Lys-327 is facilitated by interaction with EP300/p300: it prevents ubiquitination and subsequent degradation by the proteasome and promotes acetylation of target proteins. Deacetylated by HDAC3 and SIRT1. Deacetylation by HDAC3 promotes its ubiquitination and cytoplasmic localization. Post-translationally, sumoylated by UBE2I at Lys-430 and Lys-451, leading to increase of its histone acetyltransferase activity in UV-induced DNA damage response, as well as its translocation to nuclear bodies. Sumoylation with SUMO2 by PIAS4 at Lys-430 promotes repair of DNA double-strand breaks (DSBs) via homologous recombination (HR). Sumoylation by PIAS4 impairs interaction with PRKDC, inhibiting non-homologous end joining (NHEJ)-mediated repair of DSBs, thereby facilitating HR. Desumoylated by SENP3. Ubiquitinated by MDM2, leading to its proteasome-dependent degradation. Ubiquitination is prevented by autoacetylation at Lys-327. Ubiquitinated following deacetylation by HDAC3, leading to cytoplasmic localization. Deubiquitinated by USP7 following interaction with ATF3, promoting its stabilization. In terms of tissue distribution, expressed in testis, heart, brain, kidney and liver. Weakly expressed in lung.

The protein localises to the nucleus. The protein resides in the chromosome. Its subcellular location is the cytoplasm. It localises to the centromere. It is found in the kinetochore. The protein localises to the cytoskeleton. The protein resides in the spindle pole. Its subcellular location is the nucleolus. It localises to the perinuclear region. The enzyme catalyses L-lysyl-[histone] + acetyl-CoA = N(6)-acetyl-L-lysyl-[histone] + CoA + H(+). It carries out the reaction L-lysyl-[protein] + acetyl-CoA = N(6)-acetyl-L-lysyl-[protein] + CoA + H(+). It catalyses the reaction (2E)-butenoyl-CoA + L-lysyl-[protein] = N(6)-(2E)-butenoyl-L-lysyl-[protein] + CoA + H(+). The catalysed reaction is 2-hydroxyisobutanoyl-CoA + L-lysyl-[protein] = N(6)-(2-hydroxyisobutanoyl)-L-lysyl-[protein] + CoA + H(+). The enzyme catalyses (S)-lactoyl-CoA + L-lysyl-[protein] = N(6)-[(S)-lactoyl]-L-lysyl-[protein] + CoA + H(+). With respect to regulation, acyltransferase and acetyltransferase activities are activated by phosphorylation and autoacetylation. Autoacetylation activates the histone acetyltransferase activity. In terms of biological role, catalytic subunit of the NuA4 histone acetyltransferase complex, a multiprotein complex involved in transcriptional activation of select genes principally by acetylation of nucleosomal histones H2A and H4. Histone acetylation alters nucleosome-DNA interactions and promotes interaction of the modified histones with other proteins which positively regulate transcription. The NuA4 histone acetyltransferase complex is required for the activation of transcriptional programs associated with proto-oncogene mediated growth induction, tumor suppressor mediated growth arrest and replicative senescence, apoptosis, and DNA repair. The NuA4 complex plays a direct role in repair of DNA double-strand breaks (DSBs) by promoting homologous recombination (HR): the complex inhibits TP53BP1 binding to chromatin via MBTD1, which recognizes and binds histone H4 trimethylated at 'Lys-20' (H4K20me), and KAT5 that catalyzes acetylation of 'Lys-15' of histone H2A (H2AK15ac), thereby blocking the ubiquitination mark required for TP53BP1 localization at DNA breaks. Also involved in DSB repair by mediating acetylation of 'Lys-5' of histone H2AX (H2AXK5ac), promoting NBN/NBS1 assembly at the sites of DNA damage. The NuA4 complex plays a key role in hematopoietic stem cell maintenance and is required to maintain acetylated H2A.Z/H2AZ1 at MYC target genes. The NuA4 complex is also required for spermatid development by promoting acetylation of histones: histone hyperacetylation is required for histone replacement during the transition from round to elongating spermatids. Component of a SWR1-like complex that specifically mediates the removal of histone H2A.Z/H2AZ1 from the nucleosome. Also acetylates non-histone proteins, such as BMAL1, ATM, AURKB, CHKA, CGAS, ERCC4/XPF, LPIN1, TP53/p53, NDC80/HEC1, NR1D2, RAN, SOX4, FOXP3, SQSTM1, ULK1 and RUBCNL/Pacer. Directly acetylates and activates ATM. Promotes nucleotide excision repair (NER) by mediating acetylation of ERCC4/XPF, thereby promoting formation of the ERCC4-ERCC1 complex. Relieves NR1D2-mediated inhibition of APOC3 expression by acetylating NR1D2. Acts as a regulator of regulatory T-cells (Treg) by catalyzing FOXP3 acetylation, thereby promoting FOXP3 transcriptional repressor activity. Involved in skeletal myoblast differentiation by mediating acetylation of SOX4. Catalyzes acetylation of APBB1/FE65, increasing its transcription activator activity. Promotes transcription elongation during the activation phase of the circadian cycle by catalyzing acetylation of BMAL1, promoting elongation of circadian transcripts. Together with GSK3 (GSK3A or GSK3B), acts as a regulator of autophagy: phosphorylated at Ser-86 by GSK3 under starvation conditions, leading to activate acetyltransferase activity and promote acetylation of key autophagy regulators, such as ULK1 and RUBCNL/Pacer. Acts as a regulator of the cGAS-STING innate antiviral response by catalyzing acetylation the N-terminus of CGAS, thereby promoting CGAS DNA-binding and activation. Also regulates lipid metabolism by mediating acetylation of CHKA or LPIN1. Promotes lipolysis of lipid droplets following glucose deprivation by mediating acetylation of isoform 1 of CHKA, thereby promoting monomerization of CHKA and its conversion into a tyrosine-protein kinase. Acts as a regulator of fatty-acid-induced triacylglycerol synthesis by catalyzing acetylation of LPIN1, thereby promoting the synthesis of diacylglycerol. In addition to protein acetyltransferase, can use different acyl-CoA substrates, such as (2E)-butenoyl-CoA (crotonyl-CoA), S-lactoyl-CoA (lactyl-CoA) and 2-hydroxyisobutanoyl-CoA (2-hydroxyisobutyryl-CoA), and is able to mediate protein crotonylation, lactylation and 2-hydroxyisobutyrylation, respectively. Acts as a key regulator of chromosome segregation and kinetochore-microtubule attachment during mitosis by mediating acetylation or crotonylation of target proteins. Catalyzes acetylation of AURKB at kinetochores, increasing AURKB activity and promoting accurate chromosome segregation in mitosis. Acetylates RAN during mitosis, promoting microtubule assembly at mitotic chromosomes. Acetylates NDC80/HEC1 during mitosis, promoting robust kinetochore-microtubule attachment. Catalyzes crotonylation of MAPRE1/EB1, thereby ensuring accurate spindle positioning in mitosis. Catalyzes lactylation of NBN/NBS1 in response to DNA damage, thereby promoting DNA double-strand breaks (DSBs) via homologous recombination (HR). The sequence is that of Histone acetyltransferase KAT5 from Mus musculus (Mouse).